Here is a 46-residue protein sequence, read N- to C-terminus: Pape peptide (46 aa).

Residues 1–10 (KQLLKEALAP) are compositionally biased toward low complexity. Positions 1 to 46 (KQLLKEALAPEPAPKPAPEPAPEPAPEPAPEAAPEPAAAAPEAAPE) are disordered. Residues 11–33 (EPAPKPAPEPAPEPAPEPAPEAA) are compositionally biased toward pro residues. 4 PAPE repeats span residues 16–19 (PAPE), 20–23 (PAPE), 24–27 (PAPE), and 28–31 (PAPE). Over residues 34 to 46 (PEPAAAAPEAAPE) the composition is skewed to low complexity.

In terms of tissue distribution, expressed by the venom gland.

The protein resides in the secreted. The protein is Pape peptide of Tityus stigmurus (Brazilian scorpion).